A 299-amino-acid polypeptide reads, in one-letter code: Polyamine aminopropyltransferase (299 aa).

Positions 6–252 (IVLLFALLCT…SLPNQQALQQ (247 aa)) constitute a PABS domain. S-methyl-5'-thioadenosine-binding positions include Gln-36, Glu-120, and 147–148 (DA). Asp-168 serves as the catalytic Proton acceptor.

Belongs to the spermidine/spermine synthase family. In terms of assembly, homodimer or homotetramer.

It localises to the cytoplasm. The enzyme catalyses S-adenosyl 3-(methylsulfanyl)propylamine + putrescine = S-methyl-5'-thioadenosine + spermidine + H(+). It participates in amine and polyamine biosynthesis; spermidine biosynthesis; spermidine from putrescine: step 1/1. Functionally, catalyzes the irreversible transfer of a propylamine group from the amino donor S-adenosylmethioninamine (decarboxy-AdoMet) to putrescine (1,4-diaminobutane) to yield spermidine. The sequence is that of Polyamine aminopropyltransferase from Vibrio vulnificus (strain CMCP6).